Consider the following 509-residue polypeptide: Maturase K (509 aa).

This sequence belongs to the intron maturase 2 family. MatK subfamily.

The protein localises to the plastid. Its subcellular location is the chloroplast. Its function is as follows. Usually encoded in the trnK tRNA gene intron. Probably assists in splicing its own and other chloroplast group II introns. This is Maturase K from Nicotiana glauca (Glaucous tobacco).